The sequence spans 357 residues: Anthranilate phosphoribosyltransferase (357 aa).

5-phospho-alpha-D-ribose 1-diphosphate contacts are provided by residues Gly-91, 94 to 95 (GD), Thr-99, 101 to 104 (NIST), 119 to 127 (KHGNRSVSS), and Ser-131. Position 91 (Gly-91) interacts with anthranilate. Ser-103 provides a ligand contact to Mg(2+). Residue Asn-122 participates in anthranilate binding. Arg-177 is a binding site for anthranilate. Residues Asp-235 and Glu-236 each contribute to the Mg(2+) site.

Belongs to the anthranilate phosphoribosyltransferase family. As to quaternary structure, homodimer. Requires Mg(2+) as cofactor.

The enzyme catalyses N-(5-phospho-beta-D-ribosyl)anthranilate + diphosphate = 5-phospho-alpha-D-ribose 1-diphosphate + anthranilate. It functions in the pathway amino-acid biosynthesis; L-tryptophan biosynthesis; L-tryptophan from chorismate: step 2/5. In terms of biological role, catalyzes the transfer of the phosphoribosyl group of 5-phosphorylribose-1-pyrophosphate (PRPP) to anthranilate to yield N-(5'-phosphoribosyl)-anthranilate (PRA). This Shewanella baltica (strain OS195) protein is Anthranilate phosphoribosyltransferase.